Reading from the N-terminus, the 290-residue chain is Non-homologous end joining protein Ku (290 aa).

The Ku domain occupies 11–183 (TFGLISMPVR…EAPKITSEVK (173 aa)). The segment at 253-290 (MKDQKKGSRLAEVDKESTVQMTPKKPAVKERRGRKRVA) is disordered. The span at 254–269 (KDQKKGSRLAEVDKES) shows a compositional bias: basic and acidic residues.

The protein belongs to the prokaryotic Ku family. Homodimer. Interacts with LigD.

With LigD forms a non-homologous end joining (NHEJ) DNA repair enzyme, which repairs dsDNA breaks with reduced fidelity. Binds linear dsDNA with 5'- and 3'- overhangs but not closed circular dsDNA nor ssDNA. Recruits and stimulates the ligase activity of LigD. The chain is Non-homologous end joining protein Ku from Koribacter versatilis (strain Ellin345).